Consider the following 591-residue polypeptide: MTLFILTETSAGYALLKAKDKKLLKRDDLATEASTAEGVSNLVKLKSFQKFDSAATALEEVASLVEGKVTPRLASLLDEIKDEKKVSLAVADPKLGNAIGKLPGMSIQLVADSTTTDIFRAIREHLPTLIPGLLPQDMSTMSLGLSHSLARHKLKFSPDKIDTMIVQAIGLLDDLDKELNTYAMRVKEWYGWHFPELAKILNDNIAYAKLVLKMGMRSNWETADLAEILPEELEGTVKAAADRSMGTEISQEDLENIQALAEQVVGFAEYRQQLAGYLTARMNAIAPNLTALVGELVGARLIAHAGSLTNLSKSPASTIQILGAEKALFRALKTKHDTPKYGLIYHASLIGQATGKNKGKMARVLAAKASLGLRVDALAEWDDDATEEDKAALGTEARYNLERKLAAMEGKPLKPRGVAIGPNGASVQPKKFEINETRRYNADADALTGDQPASKKDKKLIEEVSDEEMADADSDEEPKANGTKDDDSSDESEEESSKKHKSKKGKDTELEKMAEKAGLSVKRYKRKLERGEITFDANGNPSATSKKELKKAKKEAKKASKGDEKKRKRSDDGEEADNGEKKKKKKKKGEE.

One can recognise a Nop domain in the interval 285–410; the sequence is IAPNLTALVG…LERKLAAMEG (126 aa). A disordered region spans residues 413–591; sequence LKPRGVAIGP…KKKKKKKGEE (179 aa). Basic and acidic residues-rich tracts occupy residues 430–442 and 453–462; these read KKFE…RYNA and ASKKDKKLIE. Positions 463–476 are enriched in acidic residues; that stretch reads EVSDEEMADADSDE. Basic and acidic residues-rich tracts occupy residues 477–486, 505–515, and 557–571; these read EPKANGTKDD, GKDTELEKMAE, and KKAS…KRSD. The span at 581–591 shows a compositional bias: basic residues; the sequence is KKKKKKKKGEE.

It belongs to the NOP5/NOP56 family.

Its subcellular location is the nucleus. It localises to the nucleolus. In terms of biological role, required for pre-18S rRNA processing. May bind microtubules. In Neosartorya fischeri (strain ATCC 1020 / DSM 3700 / CBS 544.65 / FGSC A1164 / JCM 1740 / NRRL 181 / WB 181) (Aspergillus fischerianus), this protein is Nucleolar protein 58 (nop58).